Reading from the N-terminus, the 479-residue chain is Transcriptional regulator ERG (479 aa).

Residues 34–47 show a composition bias toward polar residues; that stretch reads TASSSSDYGQTSKM. Disordered regions lie at residues 34 to 56 and 72 to 92; these read TASS…QQDW and PSQV…KGGK. Phosphoserine occurs at positions 48, 81, and 96. Residues 113 to 199 enclose the PNT domain; it reads MPPPNMTTNE…SHLHYLRETP (87 aa). Positions 242 to 293 are disordered; that stretch reads QRITTRPDLPYEPPRRSAWTGHGHPTPQSKAAQPSPSTVPKTEDQRPQLDPY. Residues 267–281 show a composition bias toward polar residues; sequence TPQSKAAQPSPSTVP. Residue Lys282 forms a Glycyl lysine isopeptide (Lys-Gly) (interchain with G-Cter in SUMO2) linkage. Residues 311–391 constitute a DNA-binding region (ETS); it reads IQLWQFLLEL…HGKRYAYKFD (81 aa).

Belongs to the ETS family. As to quaternary structure, identified in a IGF2BP1-dependent mRNP granule complex containing untranslated mRNAs. Interacts with SETDB1.

The protein resides in the nucleus. It localises to the cytoplasm. Transcriptional regulator. May participate in transcriptional regulation through the recruitment of SETDB1 histone methyltransferase and subsequent modification of local chromatin structure. This Homo sapiens (Human) protein is Transcriptional regulator ERG (ERG).